Here is a 308-residue protein sequence, read N- to C-terminus: Probable manganese-dependent inorganic pyrophosphatase (308 aa).

Mn(2+) contacts are provided by histidine 9, aspartate 13, aspartate 15, aspartate 74, histidine 96, and aspartate 148.

This sequence belongs to the PPase class C family. Mn(2+) is required as a cofactor.

Its subcellular location is the cytoplasm. It carries out the reaction diphosphate + H2O = 2 phosphate + H(+). The polypeptide is Probable manganese-dependent inorganic pyrophosphatase (Oceanobacillus iheyensis (strain DSM 14371 / CIP 107618 / JCM 11309 / KCTC 3954 / HTE831)).